Reading from the N-terminus, the 163-residue chain is Anaerobic nitrite reductase HB1 (163 aa).

One can recognise a Globin domain in the interval 8 to 157 (VFTEEQEALV…LVAAIKIEMK (150 aa)). Positions 41–45 (EIAPS) match the Homodimerization motif. Residues S51, K65, H69, K99, T103, and H104 each coordinate heme b. Positions 111 to 123 (DEHFEVTKFALLE) match the Homodimerization motif.

This sequence belongs to the plant globin family. In terms of assembly, homodimer. It depends on heme b as a cofactor.

The protein localises to the cytoplasm. Its subcellular location is the nucleus. The enzyme catalyses Fe(III)-heme b-[protein] + nitric oxide + H2O = Fe(II)-heme b-[protein] + nitrite + 2 H(+). Phytoglobin that reduces nitrite to nitric oxide (NO) under anoxic conditions (e.g. during flooding or in waterlogged soil). May not function as an oxygen storage or transport protein. Has an unusually high affinity for O(2) through an hexacoordinate heme iron because of a very low dissociation constant. The polypeptide is Anaerobic nitrite reductase HB1 (Gossypium hirsutum (Upland cotton)).